The following is a 206-amino-acid chain: Small ribosomal subunit protein uS4A (206 aa).

The 66-residue stretch at Met98 to Asn163 folds into the S4 RNA-binding domain.

This sequence belongs to the universal ribosomal protein uS4 family. As to quaternary structure, part of the 30S ribosomal subunit. Contacts protein S5. The interaction surface between S4 and S5 is involved in control of translational fidelity.

One of the primary rRNA binding proteins, it binds directly to 16S rRNA where it nucleates assembly of the body of the 30S subunit. Its function is as follows. With S5 and S12 plays an important role in translational accuracy. The chain is Small ribosomal subunit protein uS4A from Clostridium perfringens (strain SM101 / Type A).